Consider the following 224-residue polypeptide: Probable GTP-binding protein EngB (224 aa).

Residues Ile31–Pro205 enclose the EngB-type G domain. Residues Gly39–Ser46, Gly66–Leu70, Asp84–Gly87, Thr151–Asp154, and Leu184–Ser186 each bind GTP. Ser46 and Thr68 together coordinate Mg(2+).

Belongs to the TRAFAC class TrmE-Era-EngA-EngB-Septin-like GTPase superfamily. EngB GTPase family. The cofactor is Mg(2+).

Necessary for normal cell division and for the maintenance of normal septation. This is Probable GTP-binding protein EngB from Shewanella frigidimarina (strain NCIMB 400).